The sequence spans 375 residues: Erythronate-4-phosphate dehydrogenase (375 aa).

Substrate is bound by residues serine 45 and threonine 66. Positions 146 and 175 each coordinate NAD(+). The active site involves arginine 208. Aspartate 232 serves as a coordination point for NAD(+). The active site involves glutamate 237. Histidine 254 (proton donor) is an active-site residue. Glycine 257 contacts NAD(+). Substrate is bound at residue tyrosine 258.

The protein belongs to the D-isomer specific 2-hydroxyacid dehydrogenase family. PdxB subfamily. As to quaternary structure, homodimer.

Its subcellular location is the cytoplasm. It carries out the reaction 4-phospho-D-erythronate + NAD(+) = (R)-3-hydroxy-2-oxo-4-phosphooxybutanoate + NADH + H(+). It participates in cofactor biosynthesis; pyridoxine 5'-phosphate biosynthesis; pyridoxine 5'-phosphate from D-erythrose 4-phosphate: step 2/5. Functionally, catalyzes the oxidation of erythronate-4-phosphate to 3-hydroxy-2-oxo-4-phosphonooxybutanoate. The polypeptide is Erythronate-4-phosphate dehydrogenase (Yersinia pseudotuberculosis serotype O:1b (strain IP 31758)).